The chain runs to 520 residues: GMP synthase [glutamine-hydrolyzing] (520 aa).

One can recognise a Glutamine amidotransferase type-1 domain in the interval 3-200; the sequence is AIAIIDFGSQ…FLDIANCKRD (198 aa). The active-site Nucleophile is the Cys-84. Residues His-175 and Glu-177 contribute to the active site. The GMPS ATP-PPase domain maps to 201 to 386; the sequence is WTMKSFIEEQ…IGLSDEIIFQ (186 aa). 228-234 contacts ATP; the sequence is SGGVDSS.

In terms of assembly, homodimer.

It carries out the reaction XMP + L-glutamine + ATP + H2O = GMP + L-glutamate + AMP + diphosphate + 2 H(+). The protein operates within purine metabolism; GMP biosynthesis; GMP from XMP (L-Gln route): step 1/1. Its function is as follows. Catalyzes the synthesis of GMP from XMP. The polypeptide is GMP synthase [glutamine-hydrolyzing] (Wolbachia pipientis wMel).